The sequence spans 459 residues: Alcohol acyl transferase 1 allele GSa (459 aa).

Catalysis depends on proton acceptor residues His164 and Asn385.

It belongs to the plant acyltransferase family. In terms of tissue distribution, highly expressed in the cortex and skin of ripe fruit.

It carries out the reaction butan-1-ol + acetyl-CoA = butyl acetate + CoA. The enzyme catalyses butan-1-ol + butanoyl-CoA = butyl butanoate + CoA. It catalyses the reaction butan-1-ol + hexanoyl-CoA = butyl hexanoate + CoA. The catalysed reaction is hexan-1-ol + butanoyl-CoA = hexyl butanoate + CoA. It carries out the reaction hexan-1-ol + acetyl-CoA = hexyl acetate + CoA. The enzyme catalyses 2-methylbutan-1-ol + butanoyl-CoA = 2-methylbutyl butanoate + CoA. It catalyses the reaction ethanol + butanoyl-CoA = ethyl butanoate + CoA. The catalysed reaction is hexanoyl-CoA + ethanol = ethyl hexanoate + CoA. Involved in the biosynthesis of volatile esters which confer ripe apple fruit flavor. Alcohol acyl transferase that can use a wide range of alcohols as substrate, including 2-methylbutanol, hexanol and ethanol, to produce esters such as butyl butanoate, butyl hexanoate, hexyl butanoate, ethyl butanoate and ethyl hexanoate and, to some extent, 2-methylbutyl acetate (2MBA), butyl acetate, hexyl acetate and 2-methylbutyl butanoate (2MBB). In Malus domestica (Apple), this protein is Alcohol acyl transferase 1 allele GSa.